Here is a 708-residue protein sequence, read N- to C-terminus: Ion-translocating oxidoreductase complex subunit C (708 aa).

2 4Fe-4S ferredoxin-type domains span residues G369–Y397 and K407–F436. Positions 377, 380, 383, 387, 416, 419, 422, and 426 each coordinate [4Fe-4S] cluster. The tract at residues K599–A686 is disordered.

The protein belongs to the 4Fe4S bacterial-type ferredoxin family. RnfC subfamily. As to quaternary structure, the complex is composed of six subunits: RsxA, RsxB, RsxC, RsxD, RsxE and RsxG. The cofactor is [4Fe-4S] cluster.

It is found in the cell inner membrane. Its function is as follows. Part of a membrane-bound complex that couples electron transfer with translocation of ions across the membrane. Required to maintain the reduced state of SoxR. The sequence is that of Ion-translocating oxidoreductase complex subunit C from Escherichia coli (strain 55989 / EAEC).